Reading from the N-terminus, the 211-residue chain is Ribosomal RNA large subunit methyltransferase E (211 aa).

S-adenosyl-L-methionine-binding residues include Gly55, Trp57, Asp75, Asp93, and Asp117. The active-site Proton acceptor is the Lys157.

Belongs to the class I-like SAM-binding methyltransferase superfamily. RNA methyltransferase RlmE family.

It localises to the cytoplasm. The enzyme catalyses uridine(2552) in 23S rRNA + S-adenosyl-L-methionine = 2'-O-methyluridine(2552) in 23S rRNA + S-adenosyl-L-homocysteine + H(+). Specifically methylates the uridine in position 2552 of 23S rRNA at the 2'-O position of the ribose in the fully assembled 50S ribosomal subunit. The sequence is that of Ribosomal RNA large subunit methyltransferase E from Methanothermobacter thermautotrophicus (strain ATCC 29096 / DSM 1053 / JCM 10044 / NBRC 100330 / Delta H) (Methanobacterium thermoautotrophicum).